The chain runs to 371 residues: MSNQHTLLMTNLLPVGSNISTWWNFGSMLLTCLALQTMTGFFLAIHYTANINLAFASVIHITRDIPYGWTMQSLHAIGASLFFICIYIHIARGLYYGLYMNKEVWLSGITLLFTLMATAFFGYVLPWGQMSFWAATVITNLLTAIPYLGTMLTTWLWGGFSINDPTLTRFFALHFILPFIIISLSSAHIMLLHTEGSNNPLGTNSDIDKIPFHPYHSNKDMLTATIMITMLFITLSFLPNLLNDPENFSKANPMITPQHIKPEWYFLFAYGILRSIPNKLGGTLALLTSVMILATTPFTHTSHIRSMTFRPMTQTLFWILIATLITITWTATKPVEPPFMFISQMASMIYFSFFFMNPLLGWTENKIMMNN.

Helical transmembrane passes span 25-45 (FGSM…FLAI), 69-90 (WTMQ…YIHI), 105-125 (WLSG…GYVL), and 170-190 (FFAL…AHIM). 2 residues coordinate heme b: His-75 and His-89. Heme b is bound by residues His-174 and His-188. Residue His-193 participates in a ubiquinone binding. 4 helical membrane-spanning segments follow: residues 218-238 (NKDM…LSFL), 280-300 (LGGT…PFTH), 312-332 (MTQT…WTAT), and 339-358 (FMFI…FMNP).

It belongs to the cytochrome b family. The cytochrome bc1 complex contains 3 respiratory subunits (MT-CYB, CYC1 and UQCRFS1), 2 core proteins (UQCRC1 and UQCRC2) and probably 6 low-molecular weight proteins. It depends on heme b as a cofactor.

The protein resides in the mitochondrion inner membrane. Its function is as follows. Component of the ubiquinol-cytochrome c reductase complex (complex III or cytochrome b-c1 complex) that is part of the mitochondrial respiratory chain. The b-c1 complex mediates electron transfer from ubiquinol to cytochrome c. Contributes to the generation of a proton gradient across the mitochondrial membrane that is then used for ATP synthesis. In Elapsoidea nigra (Usambara garter snake), this protein is Cytochrome b (MT-CYB).